The primary structure comprises 49 residues: Large ribosomal subunit protein bL33A (49 aa).

Residues 20 to 49 (KKNKRNNPDRVEFKKYCPRDKKSTLHRETK) form a disordered region. Residues 25–49 (NNPDRVEFKKYCPRDKKSTLHRETK) show a composition bias toward basic and acidic residues.

The protein belongs to the bacterial ribosomal protein bL33 family. Part of the 50S ribosomal subunit. Interacts with VmlR.

This is Large ribosomal subunit protein bL33A (rpmGA) from Bacillus subtilis (strain 168).